The chain runs to 327 residues: Glycerol-3-phosphate dehydrogenase [NAD(P)+] (327 aa).

The NADPH site is built by phenylalanine 14, arginine 35, and lysine 108. Residues lysine 108 and glycine 136 each coordinate sn-glycerol 3-phosphate. Alanine 140 lines the NADPH pocket. Residues lysine 191, aspartate 244, serine 254, arginine 255, and asparagine 256 each coordinate sn-glycerol 3-phosphate. The active-site Proton acceptor is the lysine 191. Position 255 (arginine 255) interacts with NADPH. 2 residues coordinate NADPH: leucine 275 and glutamate 277.

The protein belongs to the NAD-dependent glycerol-3-phosphate dehydrogenase family.

The protein resides in the cytoplasm. It catalyses the reaction sn-glycerol 3-phosphate + NAD(+) = dihydroxyacetone phosphate + NADH + H(+). The enzyme catalyses sn-glycerol 3-phosphate + NADP(+) = dihydroxyacetone phosphate + NADPH + H(+). The protein operates within membrane lipid metabolism; glycerophospholipid metabolism. In terms of biological role, catalyzes the reduction of the glycolytic intermediate dihydroxyacetone phosphate (DHAP) to sn-glycerol 3-phosphate (G3P), the key precursor for phospholipid synthesis. This Agrobacterium fabrum (strain C58 / ATCC 33970) (Agrobacterium tumefaciens (strain C58)) protein is Glycerol-3-phosphate dehydrogenase [NAD(P)+].